The sequence spans 159 residues: Ethylene-responsive transcription factor ERF069 (159 aa).

2 disordered regions span residues 1 to 36 (MKRI…KKLV) and 128 to 159 (DAPT…EEVV). A DNA-binding region (AP2/ERF) is located at residues 74-134 (KFRGVRQRPW…IGPDAPTNFG (61 aa)). Residues 136–148 (PDVDSAVVKKQDS) are compositionally biased toward basic and acidic residues.

Belongs to the AP2/ERF transcription factor family. ERF subfamily.

Its subcellular location is the nucleus. Functionally, probably acts as a transcriptional activator. Binds to the GCC-box pathogenesis-related promoter element. May be involved in the regulation of gene expression by stress factors and by components of stress signal transduction pathways. This is Ethylene-responsive transcription factor ERF069 (ERF069) from Arabidopsis thaliana (Mouse-ear cress).